The primary structure comprises 276 residues: Large ribosomal subunit protein uL2 (276 aa).

Residues 224–276 (VMNPVDHPHGGGEGKAPIGRKSPMTPWGKPTLGYKTRKKKNKSDKFIIRRRKK) are disordered. Residues 258–276 (KTRKKKNKSDKFIIRRRKK) are compositionally biased toward basic residues.

This sequence belongs to the universal ribosomal protein uL2 family. In terms of assembly, part of the 50S ribosomal subunit. Forms a bridge to the 30S subunit in the 70S ribosome.

Functionally, one of the primary rRNA binding proteins. Required for association of the 30S and 50S subunits to form the 70S ribosome, for tRNA binding and peptide bond formation. It has been suggested to have peptidyltransferase activity; this is somewhat controversial. Makes several contacts with the 16S rRNA in the 70S ribosome. The sequence is that of Large ribosomal subunit protein uL2 from Geobacillus thermodenitrificans (strain NG80-2).